The primary structure comprises 248 residues: MAGHSKFKNIMHRKGRADAARSKLFSKLSREITVAAKTGMPDPAMNPRLRLAVQNAKAESMPKDNIDRAIKKAQGGDAETYEEIRYEGFGPGGVGVIVEALTDNRNRAAANVRSIFTKNGGNLGETNSVAFMWDRVGQIVYGPEAGSEDKVMEAAIEAGADDVESDEDGHTIWTAYDALNEVAQALEAALGAAKATRIAWRPKAMTPVSGDAAATLMKLIEALEDEDDVQNVYSNADISAEELEKLAS.

The protein belongs to the TACO1 family.

It is found in the cytoplasm. This Phenylobacterium zucineum (strain HLK1) protein is Probable transcriptional regulatory protein PHZ_c3068.